We begin with the raw amino-acid sequence, 177 residues long: MTKEYATLAGGCFWCMVKPFTSYPGIKSVVSGYSGGHVDNPTYEQVCTNKTGHVEAVQITFDPEVTSFENILDIYFKTFDPTDDQGQFFDRGESYQPVIFYHDEHQKKAAEFKKQQLNEQGIFKKPVITPIKPYKNFYPAEDYHQDYYKKNPVHYYQYQRGSGRKAFIESHWGNQNA.

Residue C12 is part of the active site.

It belongs to the MsrA Met sulfoxide reductase family.

It catalyses the reaction L-methionyl-[protein] + [thioredoxin]-disulfide + H2O = L-methionyl-(S)-S-oxide-[protein] + [thioredoxin]-dithiol. It carries out the reaction [thioredoxin]-disulfide + L-methionine + H2O = L-methionine (S)-S-oxide + [thioredoxin]-dithiol. Functionally, has an important function as a repair enzyme for proteins that have been inactivated by oxidation. Catalyzes the reversible oxidation-reduction of methionine sulfoxide in proteins to methionine. This chain is Peptide methionine sulfoxide reductase MsrA 2 (msrA2), found in Staphylococcus aureus (strain Mu50 / ATCC 700699).